The primary structure comprises 383 residues: Glutamyl-tRNA reductase (383 aa).

Substrate contacts are provided by residues 38–41, Ser82, 87–89, and Gln93; these read TCNR and EDQ. The active-site Nucleophile is the Cys39. Residue 161-166 coordinates NADP(+); the sequence is GAGEIA.

This sequence belongs to the glutamyl-tRNA reductase family. As to quaternary structure, homodimer.

The enzyme catalyses (S)-4-amino-5-oxopentanoate + tRNA(Glu) + NADP(+) = L-glutamyl-tRNA(Glu) + NADPH + H(+). The protein operates within porphyrin-containing compound metabolism; protoporphyrin-IX biosynthesis; 5-aminolevulinate from L-glutamyl-tRNA(Glu): step 1/2. Functionally, catalyzes the NADPH-dependent reduction of glutamyl-tRNA(Glu) to glutamate 1-semialdehyde (GSA). The chain is Glutamyl-tRNA reductase from Methanococcus aeolicus (strain ATCC BAA-1280 / DSM 17508 / OCM 812 / Nankai-3).